A 247-amino-acid polypeptide reads, in one-letter code: UPF0259 membrane protein BU276 (247 aa).

Helical transmembrane passes span 20 to 40 (IGAI…IDMF), 85 to 105 (IMES…LISV), 114 to 134 (IVSS…LNFL), 137 to 157 (FIIQ…SIIL), 188 to 208 (IIGP…MLLA), and 218 to 238 (LFLI…IYLF).

This sequence belongs to the UPF0259 family.

It localises to the cell membrane. This chain is UPF0259 membrane protein BU276, found in Buchnera aphidicola subsp. Acyrthosiphon pisum (strain APS) (Acyrthosiphon pisum symbiotic bacterium).